Reading from the N-terminus, the 2729-residue chain is Protein NO VEIN (2729 aa).

The interval 1–27 (MQGNHDGSWSLHPSTNNGSGRANGNIN) is disordered. Short sequence motifs (nuclear localization signal) lie at residues 194–201 (KRKVDVLR) and 473–480 (MKRLGGSN). 2 disordered regions span residues 477 to 517 (GGSN…IPKL) and 2482 to 2515 (LPSSSKTRHGSSKTNTDDSKQELDTSSSKEDVTE). Composition is skewed to basic and acidic residues over residues 488 to 497 (RNHEKSDSSK) and 2496 to 2515 (NTDDSKQELDTSSSKEDVTE).

In terms of tissue distribution, specifically expressed in developing embryos, leaf primordia, and shoot and root apical meristems.

It is found in the nucleus. In terms of biological role, essential protein required for cell fate determination during embryogenesis. Mediates auxin-dependent coordinated cell-fate specification and patterning in embryos (e.g. cotyledon outgrowth and separation), shoots and roots (e.g. leaf vascular development, cellular patterning and stem cell maintenance in the meristems). Required for provascular PIN1 expression and region-specific expression of PIN7 in leaf primordia, cell type-specific expression of PIN3, PIN4, and PIN7 in the root, and PIN2 polarity in the root cortex. The sequence is that of Protein NO VEIN from Arabidopsis thaliana (Mouse-ear cress).